Reading from the N-terminus, the 199-residue chain is Outer-membrane lipoprotein LolB (199 aa).

The N-terminal stretch at 1–28 (MSACPAPRSPVRWLHAFTLFLLLAVLAG) is a signal peptide. C29 carries the N-palmitoyl cysteine lipid modification. A lipid anchor (S-diacylglycerol cysteine) is attached at C29.

This sequence belongs to the LolB family. As to quaternary structure, monomer.

Its subcellular location is the cell outer membrane. Plays a critical role in the incorporation of lipoproteins in the outer membrane after they are released by the LolA protein. The protein is Outer-membrane lipoprotein LolB of Bordetella pertussis (strain Tohama I / ATCC BAA-589 / NCTC 13251).